The sequence spans 188 residues: ATP synthase subunit b 1 (188 aa).

A helical membrane pass occupies residues 35–55 (VHFSSHFFWLAISFGFFYLFI).

This sequence belongs to the ATPase B chain family. In terms of assembly, F-type ATPases have 2 components, F(1) - the catalytic core - and F(0) - the membrane proton channel. F(1) has five subunits: alpha(3), beta(3), gamma(1), delta(1), epsilon(1). F(0) has three main subunits: a(1), b(2) and c(10-14). The alpha and beta chains form an alternating ring which encloses part of the gamma chain. F(1) is attached to F(0) by a central stalk formed by the gamma and epsilon chains, while a peripheral stalk is formed by the delta and b chains.

It localises to the cell inner membrane. F(1)F(0) ATP synthase produces ATP from ADP in the presence of a proton or sodium gradient. F-type ATPases consist of two structural domains, F(1) containing the extramembraneous catalytic core and F(0) containing the membrane proton channel, linked together by a central stalk and a peripheral stalk. During catalysis, ATP synthesis in the catalytic domain of F(1) is coupled via a rotary mechanism of the central stalk subunits to proton translocation. Its function is as follows. Component of the F(0) channel, it forms part of the peripheral stalk, linking F(1) to F(0). The polypeptide is ATP synthase subunit b 1 (Bartonella tribocorum (strain CIP 105476 / IBS 506)).